Reading from the N-terminus, the 937-residue chain is Translation initiation factor IF-2 (937 aa).

Disordered stretches follow at residues 61-156 and 171-274; these read IQAN…KAKQ and LTQS…SHKI. Residues 179 to 196 are compositionally biased toward basic and acidic residues; that stretch reads AKKEISEVKKQEQEIKRH. The segment covering 197–208 has biased composition (basic residues); it reads ENIKRRTGFRVI. Residues 237–252 show a composition bias toward basic and acidic residues; sequence EDIKKEWQEKDKQEAK. Residues 436-605 form the tr-type G domain; it reads ERPPVVTIMG…LIQADIMELK (170 aa). The interval 445–452 is G1; it reads GHVDHGKT. 445–452 provides a ligand contact to GTP; sequence GHVDHGKT. Positions 470–474 are G2; the sequence is GITQH. Residues 491–494 form a G3 region; it reads DTPG. GTP is bound by residues 491–495 and 545–548; these read DTPGH and NKMD. The G4 stretch occupies residues 545–548; it reads NKMD. Residues 581–583 are G5; it reads SAK.

It belongs to the TRAFAC class translation factor GTPase superfamily. Classic translation factor GTPase family. IF-2 subfamily.

It localises to the cytoplasm. Functionally, one of the essential components for the initiation of protein synthesis. Protects formylmethionyl-tRNA from spontaneous hydrolysis and promotes its binding to the 30S ribosomal subunits. Also involved in the hydrolysis of GTP during the formation of the 70S ribosomal complex. This Helicobacter pylori (strain G27) protein is Translation initiation factor IF-2.